Reading from the N-terminus, the 313-residue chain is Ribosomal RNA small subunit methyltransferase H (313 aa).

Residues 35-37 (GGH), aspartate 55, phenylalanine 79, aspartate 101, and glutamine 108 contribute to the S-adenosyl-L-methionine site.

It belongs to the methyltransferase superfamily. RsmH family.

The protein localises to the cytoplasm. It carries out the reaction cytidine(1402) in 16S rRNA + S-adenosyl-L-methionine = N(4)-methylcytidine(1402) in 16S rRNA + S-adenosyl-L-homocysteine + H(+). Functionally, specifically methylates the N4 position of cytidine in position 1402 (C1402) of 16S rRNA. The protein is Ribosomal RNA small subunit methyltransferase H of Klebsiella pneumoniae subsp. pneumoniae (strain ATCC 700721 / MGH 78578).